Here is a 166-residue protein sequence, read N- to C-terminus: MSEETGAADTLTNGEDHLPQVALIAQYVKDLSFENPSAPGIYQAPEQPKIDVQFNIGSQQAGEDVYEVALKIEIKATQGDLTAYAVELVYAGLFGIRNVPEEHLPPFLLAEAPRLLFPFARRVAADAIRDGNFPSLVLEPIDFGALYMQQAEQQTALAESQPAGEA.

It belongs to the SecB family. As to quaternary structure, homotetramer, a dimer of dimers. One homotetramer interacts with 1 SecA dimer.

It is found in the cytoplasm. One of the proteins required for the normal export of preproteins out of the cell cytoplasm. It is a molecular chaperone that binds to a subset of precursor proteins, maintaining them in a translocation-competent state. It also specifically binds to its receptor SecA. The chain is Protein-export protein SecB from Rhizorhabdus wittichii (strain DSM 6014 / CCUG 31198 / JCM 15750 / NBRC 105917 / EY 4224 / RW1) (Sphingomonas wittichii).